The chain runs to 306 residues: Acetyl-coenzyme A carboxylase carboxyl transferase subunit beta (306 aa).

Positions 25-294 (LWIKDPTSGE…AVNPSNPSPT (270 aa)) constitute a CoA carboxyltransferase N-terminal domain. Residues 286 to 306 (VNPSNPSPTDSQPPLSKAEAA) are disordered. Over residues 287–299 (NPSNPSPTDSQPP) the composition is skewed to polar residues.

The protein belongs to the AccD/PCCB family. In terms of assembly, acetyl-CoA carboxylase is a heterohexamer composed of biotin carboxyl carrier protein (AccB), biotin carboxylase (AccC) and two subunits each of ACCase subunit alpha (AccA) and ACCase subunit beta (AccD).

The protein localises to the cytoplasm. It catalyses the reaction N(6)-carboxybiotinyl-L-lysyl-[protein] + acetyl-CoA = N(6)-biotinyl-L-lysyl-[protein] + malonyl-CoA. Its pathway is lipid metabolism; malonyl-CoA biosynthesis; malonyl-CoA from acetyl-CoA: step 1/1. Its function is as follows. Component of the acetyl coenzyme A carboxylase (ACC) complex. Biotin carboxylase (BC) catalyzes the carboxylation of biotin on its carrier protein (BCCP) and then the CO(2) group is transferred by the transcarboxylase to acetyl-CoA to form malonyl-CoA. This is Acetyl-coenzyme A carboxylase carboxyl transferase subunit beta from Bartonella quintana (strain Toulouse) (Rochalimaea quintana).